We begin with the raw amino-acid sequence, 335 residues long: LIM and SH3 domain protein F42H10.3 (335 aa).

In terms of domain architecture, LIM zinc-binding spans 5–65 (CAREDCGKTV…DPHYPKTVAS (61 aa)). 2 Nebulin repeats span residues 66–97 (VMAD…KMKG) and 98–132 (TKIE…QKAR). Residues 128–142 (DQKARQEEVRPKEEI) are compositionally biased toward basic and acidic residues. 2 disordered regions span residues 128 to 151 (DQKA…PTPI) and 233 to 264 (DFAG…ISPT). Residues 242-260 (SNSISSTSPHSTLSSPQST) are compositionally biased toward low complexity. One can recognise an SH3 domain in the interval 266–327 (KAGFAVKAIY…PANYVQPHKL (62 aa)).

This is LIM and SH3 domain protein F42H10.3 from Caenorhabditis elegans.